Reading from the N-terminus, the 184-residue chain is Cytidylate kinase (184 aa).

Residue 8-16 participates in ATP binding; the sequence is GQPGSGKTT.

Belongs to the cytidylate kinase family. Type 2 subfamily.

Its subcellular location is the cytoplasm. It carries out the reaction CMP + ATP = CDP + ADP. It catalyses the reaction dCMP + ATP = dCDP + ADP. This Pyrobaculum aerophilum (strain ATCC 51768 / DSM 7523 / JCM 9630 / CIP 104966 / NBRC 100827 / IM2) protein is Cytidylate kinase.